A 99-amino-acid chain; its full sequence is Integration host factor subunit alpha (99 aa).

Positions Phe49–Ala75 are disordered.

It belongs to the bacterial histone-like protein family. In terms of assembly, heterodimer of an alpha and a beta chain.

In terms of biological role, this protein is one of the two subunits of integration host factor, a specific DNA-binding protein that functions in genetic recombination as well as in transcriptional and translational control. The protein is Integration host factor subunit alpha of Salmonella arizonae (strain ATCC BAA-731 / CDC346-86 / RSK2980).